The primary structure comprises 236 residues: MNSLSFLNHEFEAFPSPELALTDPNGLLAIGGDLRPERLLTAYYHGIFPWFNADDPILWWSPDPRAIFIPGQVNISTSLRKYLKKQPWHFTINHAFTDVMAGCAQPRRKQAGTWITHEIQMAYRELHHNGHAHSVEVWHGERLIGGLYGLAIGQVFCGESMFHRETNASKAAMLLLQQHLINMDFKLIDAQVMNPHLESLGAKPVKRANFIQLLTQFRDNTANPAAWIPSEVTLEL.

Belongs to the L/F-transferase family.

The protein resides in the cytoplasm. The enzyme catalyses N-terminal L-lysyl-[protein] + L-leucyl-tRNA(Leu) = N-terminal L-leucyl-L-lysyl-[protein] + tRNA(Leu) + H(+). It carries out the reaction N-terminal L-arginyl-[protein] + L-leucyl-tRNA(Leu) = N-terminal L-leucyl-L-arginyl-[protein] + tRNA(Leu) + H(+). The catalysed reaction is L-phenylalanyl-tRNA(Phe) + an N-terminal L-alpha-aminoacyl-[protein] = an N-terminal L-phenylalanyl-L-alpha-aminoacyl-[protein] + tRNA(Phe). In terms of biological role, functions in the N-end rule pathway of protein degradation where it conjugates Leu, Phe and, less efficiently, Met from aminoacyl-tRNAs to the N-termini of proteins containing an N-terminal arginine or lysine. In Shewanella sp. (strain MR-7), this protein is Leucyl/phenylalanyl-tRNA--protein transferase.